We begin with the raw amino-acid sequence, 173 residues long: Peptidyl-prolyl cis-trans isomerase 3 (173 aa).

A PPIase cyclophilin-type domain is found at 7–170 (FFDITIGGKA…KDCMIADCGQ (164 aa)).

It belongs to the cyclophilin-type PPIase family. As to expression, exclusively expressed in the single anterior excretory cell.

The catalysed reaction is [protein]-peptidylproline (omega=180) = [protein]-peptidylproline (omega=0). Functionally, catalyzes the cis-trans isomerization of proline imidic peptide bonds in oligopeptides. Plays a role in protein folding, transport and assembly. This chain is Peptidyl-prolyl cis-trans isomerase 3 (cyn-3), found in Caenorhabditis elegans.